The primary structure comprises 171 residues: 3-hydroxydecanoyl-[acyl-carrier-protein] dehydratase (171 aa).

His70 is an active-site residue.

The protein belongs to the thioester dehydratase family. FabA subfamily. In terms of assembly, homodimer.

It is found in the cytoplasm. It carries out the reaction a (3R)-hydroxyacyl-[ACP] = a (2E)-enoyl-[ACP] + H2O. The catalysed reaction is (3R)-hydroxydecanoyl-[ACP] = (2E)-decenoyl-[ACP] + H2O. It catalyses the reaction (2E)-decenoyl-[ACP] = (3Z)-decenoyl-[ACP]. The protein operates within lipid metabolism; fatty acid biosynthesis. Functionally, necessary for the introduction of cis unsaturation into fatty acids. Catalyzes the dehydration of (3R)-3-hydroxydecanoyl-ACP to E-(2)-decenoyl-ACP and then its isomerization to Z-(3)-decenoyl-ACP. Can catalyze the dehydratase reaction for beta-hydroxyacyl-ACPs with saturated chain lengths up to 16:0, being most active on intermediate chain length. This is 3-hydroxydecanoyl-[acyl-carrier-protein] dehydratase from Pseudomonas putida (strain ATCC 700007 / DSM 6899 / JCM 31910 / BCRC 17059 / LMG 24140 / F1).